The following is a 1440-amino-acid chain: Actin cytoskeleton-regulatory complex protein PAN1 (1440 aa).

Polar residues predominate over residues 1–21; that stretch reads MYNPYQQPSYGAPQQPQQTGY. The interval 1–67 is disordered; sequence MYNPYQQPSY…TGFQPQATGY (67 aa). Residues 39–63 are compositionally biased toward low complexity; the sequence is TGYYQQQPTYQQPGFQPQQTGFQPQ. An EH 1 domain is found at 117–206; it reads DQSKFEHLFR…EKWSNEVQSF (90 aa). The EF-hand 1 domain maps to 150-185; that stretch reads LPPVTLAEIWSLSDTNKSGSLLFPEFALSLHLCNLA. 2 disordered regions span residues 234–285 and 297–428; these read EKTS…PLQP and QRQN…KPGQ. Polar residues-rich tracts occupy residues 245–257 and 297–384; these read PSTS…TGFQ and QRQN…YQPL. The segment covering 385–398 has biased composition (low complexity); sequence QSQGTGFQSQGTIQ. Positions 399–423 are enriched in polar residues; that stretch reads PQGTGFQPQSTGFQPQPTGLSSQPT. Positions 480–569 constitute an EH 2 domain; it reads EKSIYDGIFQ…PELIPPSKKH (90 aa). The 36-residue stretch at 513 to 548 folds into the EF-hand 2 domain; it reads LARPDLETIWNLADGDNKGKLNKDEFSVAMHLVYRR. Disordered regions lie at residues 564 to 629 and 861 to 1440; these read PPSK…GTMS and RSLP…RVVD. Residues 573-583 are compositionally biased toward polar residues; the sequence is SMDSLKNSLRG. The stretch at 627–686 forms a coiled coil; the sequence is TMSIEQLKKEIREKKILLDAMDSEDRDSSVLSQRDREWNEREIESLKFRILQAHNKLESS. Residues 867–876 show a composition bias toward basic and acidic residues; that stretch reads EGSKNGRNEK. The segment covering 882–914 has biased composition (low complexity); that stretch reads TQPTKSQSQSAQSTQSQSQSTQSVQTQPAQPAT. Residues 921 to 984 are compositionally biased toward basic and acidic residues; sequence PEDRAAYIKA…KETETQRETN (64 aa). The segment covering 985 to 994 has biased composition (polar residues); sequence TKSTSQTSKA. Over residues 1023 to 1032 the composition is skewed to acidic residues; sequence PEDDSEDEEY. Positions 1024–1076 form a coiled coil; the sequence is EDDSEDEEYAALMKQKQEMEERRLRKKKEKEERLARLKREMEEMNKEEDSDEE. Residues 1038 to 1067 are compositionally biased toward basic and acidic residues; the sequence is QKQEMEERRLRKKKEKEERLARLKREMEEM. The segment covering 1068–1077 has biased composition (acidic residues); sequence NKEEDSDEEP. A compositionally biased stretch (polar residues) spans 1080–1100; that stretch reads SVPTYTNGSVKSSTQPISQSE. Basic and acidic residues predominate over residues 1101-1112; the sequence is EVPKTEEEKSGE. Residues 1140 to 1155 show a composition bias toward low complexity; that stretch reads SKANPFSKNNNPFFKP. Residues 1180-1192 are compositionally biased toward acidic residues; the sequence is DWSDSDDNSSDDD. A compositionally biased stretch (basic and acidic residues) spans 1218–1230; it reads TIEKEETGSKETA. 4 stretches are compositionally biased toward pro residues: residues 1232–1255, 1311–1324, 1333–1353, and 1362–1402; these read VPPP…PPPI, DVPP…PPPQ, APPP…PPSL, and PPAP…PPGG. The 18-residue stretch at 1405 to 1422 folds into the WH2 domain; sequence NIGALLGQITGGKSLKKV. Residues 1420–1430 are compositionally biased toward basic and acidic residues; sequence KKVDDSQKRIA.

This sequence belongs to the PAN1 family. As to quaternary structure, component of the PAN1 actin cytoskeleton-regulatory complex.

It is found in the cell membrane. Its subcellular location is the endosome membrane. The protein localises to the cytoplasm. The protein resides in the cytoskeleton. It localises to the actin patch. Its function is as follows. Component of the PAN1 actin cytoskeleton-regulatory complex required for the internalization of endosomes during actin-coupled endocytosis. The complex links the site of endocytosis to the cell membrane-associated actin cytoskeleton. Mediates uptake of external molecules and vacuolar degradation of plasma membrane proteins. Plays a role in the proper organization of the cell membrane-associated actin cytoskeleton and promotes its destabilization. In Meyerozyma guilliermondii (strain ATCC 6260 / CBS 566 / DSM 6381 / JCM 1539 / NBRC 10279 / NRRL Y-324) (Yeast), this protein is Actin cytoskeleton-regulatory complex protein PAN1 (PAN1).